The chain runs to 100 residues: Putative sodium channel toxin Ts26 (100 aa).

A signal peptide spans 1–22 (MVKSAMKIVILILFVLLIRVES). The region spanning 24–92 (RNGYPDISDG…VMDTTIEYCE (69 aa)) is the LCN-type CS-alpha/beta domain. 4 cysteine pairs are disulfide-bonded: C38–C64, C50–C69, C54–C71, and C65–C91.

This sequence belongs to the long (4 C-C) scorpion toxin superfamily. Sodium channel inhibitor family. In terms of tissue distribution, expressed by the venom gland.

Its subcellular location is the secreted. Its function is as follows. Putative sodium channel toxin. This is Putative sodium channel toxin Ts26 from Tityus serrulatus (Brazilian scorpion).